The following is a 513-amino-acid chain: ATP synthase subunit alpha (513 aa).

169–176 (GDRQTGKT) provides a ligand contact to ATP.

This sequence belongs to the ATPase alpha/beta chains family. In terms of assembly, F-type ATPases have 2 components, CF(1) - the catalytic core - and CF(0) - the membrane proton channel. CF(1) has five subunits: alpha(3), beta(3), gamma(1), delta(1), epsilon(1). CF(0) has three main subunits: a(1), b(2) and c(9-12). The alpha and beta chains form an alternating ring which encloses part of the gamma chain. CF(1) is attached to CF(0) by a central stalk formed by the gamma and epsilon chains, while a peripheral stalk is formed by the delta and b chains.

Its subcellular location is the cell inner membrane. The enzyme catalyses ATP + H2O + 4 H(+)(in) = ADP + phosphate + 5 H(+)(out). Produces ATP from ADP in the presence of a proton gradient across the membrane. The alpha chain is a regulatory subunit. The protein is ATP synthase subunit alpha of Actinobacillus succinogenes (strain ATCC 55618 / DSM 22257 / CCUG 43843 / 130Z).